A 252-amino-acid polypeptide reads, in one-letter code: Bridging integrator 3 homolog (252 aa).

The region spanning glycine 8 to glutamate 231 is the BAR domain. Coiled coils occupy residues lysine 17 to serine 57, serine 119 to threonine 150, and glutamate 224 to arginine 244.

The protein localises to the cytoplasm. It localises to the cytoskeleton. In terms of biological role, involved in cytokinesis and septation where it has a role in the localization of F-actin. This is Bridging integrator 3 homolog (bin3) from Xenopus laevis (African clawed frog).